We begin with the raw amino-acid sequence, 430 residues long: Adenylosuccinate synthetase (430 aa).

GTP contacts are provided by residues 13-19 (GDEGKGK) and 41-43 (GHT). The active-site Proton acceptor is D14. Mg(2+) contacts are provided by D14 and G41. IMP contacts are provided by residues 14–17 (DEGK), 39–42 (NAGH), T130, R144, Q225, T240, and R304. The active-site Proton donor is H42. 300-306 (ASTGRPR) contributes to the substrate binding site. GTP contacts are provided by residues R306, 332–334 (KLD), and 414–416 (STG).

Belongs to the adenylosuccinate synthetase family. Homodimer. It depends on Mg(2+) as a cofactor.

It localises to the cytoplasm. It catalyses the reaction IMP + L-aspartate + GTP = N(6)-(1,2-dicarboxyethyl)-AMP + GDP + phosphate + 2 H(+). It functions in the pathway purine metabolism; AMP biosynthesis via de novo pathway; AMP from IMP: step 1/2. Plays an important role in the de novo pathway of purine nucleotide biosynthesis. Catalyzes the first committed step in the biosynthesis of AMP from IMP. The protein is Adenylosuccinate synthetase of Xylella fastidiosa (strain M12).